The following is a 352-amino-acid chain: Protein Wnt-3a (352 aa).

The N-terminal stretch at 1–18 (MAPLGYLLVLCSLKQALG) is a signal peptide. Disulfide bonds link cysteine 77-cysteine 88, cysteine 128-cysteine 136, cysteine 138-cysteine 155, cysteine 203-cysteine 217, cysteine 205-cysteine 212, cysteine 281-cysteine 312, cysteine 297-cysteine 307, cysteine 311-cysteine 351, cysteine 327-cysteine 342, cysteine 329-cysteine 339, and cysteine 334-cysteine 335. N-linked (GlcNAc...) asparagine glycosylation occurs at asparagine 87. A lipid anchor (O-palmitoleoyl serine; by PORCN) is attached at serine 209. N-linked (GlcNAc...) asparagine glycosylation occurs at asparagine 298.

This sequence belongs to the Wnt family. In terms of assembly, forms a soluble 1:1 complex with AFM; this prevents oligomerization and is required for prolonged biological activity. The complex with AFM may represent the physiological form in body fluids. Homooligomer; disulfide-linked, leading to inactivation. Interacts with APCDD1 and WLS. Component of the Wnt-Fzd-LRP5-LRP6 signaling complex that contains a WNT protein, a FZD protein and LRP5 or LRP6. Interacts directly in the complex with LRP6. Interacts with PORCN. Interacts with glypican GPC3. Interacts with PKD1 (via extracellular domain). Interacts with FZD5. Proteolytic processing by TIKI1 and TIKI2 promotes oxidation and formation of large disulfide-bond oligomers, leading to inactivation of WNT3A. In terms of processing, disulfide bonds have critical and distinct roles in secretion and activity. Loss of each conserved cysteine in WNT3A results in high molecular weight oxidized Wnt oligomers, which are formed through inter-Wnt disulfide bonding. Post-translationally, palmitoleoylation by PORCN is required for efficient binding to frizzled receptors. Palmitoleoylation is required for proper trafficking to cell surface, vacuolar acidification is critical to release palmitoleoylated WNT3A from WLS in secretory vesicles. Depalmitoleoylated by NOTUM, leading to inhibit Wnt signaling pathway, possibly by promoting disulfide bond formation and oligomerization. Dorsal portion of the neural tube (developing roof plate), and mesenchyme tissue surrounding the umbilical veins.

Its subcellular location is the secreted. The protein localises to the extracellular space. It is found in the extracellular matrix. Ligand for members of the frizzled family of seven transmembrane receptors. Functions in the canonical Wnt signaling pathway that results in activation of transcription factors of the TCF/LEF family. Required for normal embryonic mesoderm development and formation of caudal somites. Required for normal morphogenesis of the developing neural tube. Mediates self-renewal of the stem cells at the bottom on intestinal crypts (in vitro). This chain is Protein Wnt-3a (Wnt3a), found in Mus musculus (Mouse).